Here is a 37-residue protein sequence, read N- to C-terminus: Esculentin-2JDb (37 aa).

Cys31 and Cys37 form a disulfide bridge.

In terms of tissue distribution, expressed by the skin glands.

The protein resides in the secreted. Its function is as follows. Has antibacterial activity against E.coli and S.aureus strains. The polypeptide is Esculentin-2JDb (Odorrana jingdongensis (Jingdong frog)).